Reading from the N-terminus, the 142-residue chain is Large ribosomal subunit protein uL11 (142 aa).

It belongs to the universal ribosomal protein uL11 family. As to quaternary structure, part of the ribosomal stalk of the 50S ribosomal subunit. Interacts with L10 and the large rRNA to form the base of the stalk. L10 forms an elongated spine to which L12 dimers bind in a sequential fashion forming a multimeric L10(L12)X complex. In terms of processing, one or more lysine residues are methylated.

Functionally, forms part of the ribosomal stalk which helps the ribosome interact with GTP-bound translation factors. This chain is Large ribosomal subunit protein uL11, found in Shewanella loihica (strain ATCC BAA-1088 / PV-4).